The primary structure comprises 405 residues: Cysteine desulfurase IscS (405 aa).

Asparagine 156 provides a ligand contact to pyridoxal 5'-phosphate. Lysine 207 is modified (N6-(pyridoxal phosphate)lysine). Catalysis depends on cysteine 329, which acts as the Cysteine persulfide intermediate. Cysteine 329 serves as a coordination point for [2Fe-2S] cluster.

It belongs to the class-V pyridoxal-phosphate-dependent aminotransferase family. NifS/IscS subfamily. As to quaternary structure, homodimer. Forms a heterotetramer with IscU, interacts with other sulfur acceptors. The cofactor is pyridoxal 5'-phosphate.

It is found in the cytoplasm. It catalyses the reaction (sulfur carrier)-H + L-cysteine = (sulfur carrier)-SH + L-alanine. It participates in cofactor biosynthesis; iron-sulfur cluster biosynthesis. Functionally, master enzyme that delivers sulfur to a number of partners involved in Fe-S cluster assembly, tRNA modification or cofactor biosynthesis. Catalyzes the removal of elemental sulfur atoms from cysteine to produce alanine. Functions as a sulfur delivery protein for Fe-S cluster synthesis onto IscU, an Fe-S scaffold assembly protein, as well as other S acceptor proteins. In Dechloromonas aromatica (strain RCB), this protein is Cysteine desulfurase IscS.